Here is a 488-residue protein sequence, read N- to C-terminus: Protein nucleotidyltransferase YdiU (488 aa).

Gly91, Gly93, Arg94, Lys114, Asp126, Gly127, Arg177, and Arg184 together coordinate ATP. The active-site Proton acceptor is the Asp253. Mg(2+)-binding residues include Asn254 and Asp263. Position 263 (Asp263) interacts with ATP.

The protein belongs to the SELO family. Mg(2+) is required as a cofactor. Mn(2+) serves as cofactor.

It catalyses the reaction L-seryl-[protein] + ATP = 3-O-(5'-adenylyl)-L-seryl-[protein] + diphosphate. The enzyme catalyses L-threonyl-[protein] + ATP = 3-O-(5'-adenylyl)-L-threonyl-[protein] + diphosphate. The catalysed reaction is L-tyrosyl-[protein] + ATP = O-(5'-adenylyl)-L-tyrosyl-[protein] + diphosphate. It carries out the reaction L-histidyl-[protein] + UTP = N(tele)-(5'-uridylyl)-L-histidyl-[protein] + diphosphate. It catalyses the reaction L-seryl-[protein] + UTP = O-(5'-uridylyl)-L-seryl-[protein] + diphosphate. The enzyme catalyses L-tyrosyl-[protein] + UTP = O-(5'-uridylyl)-L-tyrosyl-[protein] + diphosphate. Its function is as follows. Nucleotidyltransferase involved in the post-translational modification of proteins. It can catalyze the addition of adenosine monophosphate (AMP) or uridine monophosphate (UMP) to a protein, resulting in modifications known as AMPylation and UMPylation. This is Protein nucleotidyltransferase YdiU from Bacillus cereus (strain B4264).